The primary structure comprises 729 residues: Phosphoribosylformylglycinamidine synthase subunit PurL (729 aa).

Residue His54 is part of the active site. ATP contacts are provided by Tyr57 and Lys96. Position 98 (Glu98) interacts with Mg(2+). Substrate contacts are provided by residues 99–102 (SHNH) and Arg121. His100 functions as the Proton acceptor in the catalytic mechanism. Residue Asp122 participates in Mg(2+) binding. Gln245 contacts substrate. Position 273 (Asp273) interacts with Mg(2+). 317–319 (ETQ) serves as a coordination point for substrate. Residues Asp495 and Gly532 each coordinate ATP. Asn533 provides a ligand contact to Mg(2+). A substrate-binding site is contributed by Ser535.

The protein belongs to the FGAMS family. In terms of assembly, monomer. Part of the FGAM synthase complex composed of 1 PurL, 1 PurQ and 2 PurS subunits.

It is found in the cytoplasm. It catalyses the reaction N(2)-formyl-N(1)-(5-phospho-beta-D-ribosyl)glycinamide + L-glutamine + ATP + H2O = 2-formamido-N(1)-(5-O-phospho-beta-D-ribosyl)acetamidine + L-glutamate + ADP + phosphate + H(+). The protein operates within purine metabolism; IMP biosynthesis via de novo pathway; 5-amino-1-(5-phospho-D-ribosyl)imidazole from N(2)-formyl-N(1)-(5-phospho-D-ribosyl)glycinamide: step 1/2. Part of the phosphoribosylformylglycinamidine synthase complex involved in the purines biosynthetic pathway. Catalyzes the ATP-dependent conversion of formylglycinamide ribonucleotide (FGAR) and glutamine to yield formylglycinamidine ribonucleotide (FGAM) and glutamate. The FGAM synthase complex is composed of three subunits. PurQ produces an ammonia molecule by converting glutamine to glutamate. PurL transfers the ammonia molecule to FGAR to form FGAM in an ATP-dependent manner. PurS interacts with PurQ and PurL and is thought to assist in the transfer of the ammonia molecule from PurQ to PurL. In Staphylococcus epidermidis (strain ATCC 35984 / DSM 28319 / BCRC 17069 / CCUG 31568 / BM 3577 / RP62A), this protein is Phosphoribosylformylglycinamidine synthase subunit PurL.